Reading from the N-terminus, the 301-residue chain is Ribosomal RNA small subunit methyltransferase A (301 aa).

S-adenosyl-L-methionine contacts are provided by Asn-18, Leu-20, Gly-45, Glu-66, Asp-91, and Asn-112. Residues 267 to 301 (PPEAAPVKEKRRMAKNKMTEPANNNLNENSAPEVD) are disordered. The span at 287–301 (PANNNLNENSAPEVD) shows a compositional bias: polar residues.

Belongs to the class I-like SAM-binding methyltransferase superfamily. rRNA adenine N(6)-methyltransferase family. RsmA subfamily.

The protein localises to the cytoplasm. It carries out the reaction adenosine(1518)/adenosine(1519) in 16S rRNA + 4 S-adenosyl-L-methionine = N(6)-dimethyladenosine(1518)/N(6)-dimethyladenosine(1519) in 16S rRNA + 4 S-adenosyl-L-homocysteine + 4 H(+). In terms of biological role, specifically dimethylates two adjacent adenosines (A1518 and A1519) in the loop of a conserved hairpin near the 3'-end of 16S rRNA in the 30S particle. May play a critical role in biogenesis of 30S subunits. The protein is Ribosomal RNA small subunit methyltransferase A of Colwellia psychrerythraea (strain 34H / ATCC BAA-681) (Vibrio psychroerythus).